Here is a 641-residue protein sequence, read N- to C-terminus: Chaperone protein DnaK (641 aa).

Thr-199 carries the phosphothreonine; by autocatalysis modification. Residues 603 to 613 show a composition bias toward polar residues; sequence YTQQGGTAGSE. Positions 603 to 641 are disordered; sequence YTQQGGTAGSETHSHEKAGGSGGDDVVDAEFEEVRDDKR. Residues 627 to 641 show a composition bias toward acidic residues; that stretch reads DVVDAEFEEVRDDKR.

The protein belongs to the heat shock protein 70 family.

Its function is as follows. Acts as a chaperone. In Methylococcus capsulatus (strain ATCC 33009 / NCIMB 11132 / Bath), this protein is Chaperone protein DnaK.